We begin with the raw amino-acid sequence, 190 residues long: Dynein axonemal light chain 1 (190 aa).

An N-acetylalanine modification is found at A2. 4 LRR repeats span residues 47–69, 70–93, 95–114, and 115–138; these read LANC…LNGL, KNLR…AVGD, LEEL…IHVM, and RKLK…KLAE. A Phosphoserine modification is found at S56.

It belongs to the dynein light chain LC1-type family. Interacts with ZMYND10 (via C-terminus). Interacts with DNAH5, a outer arm dynein heavy chain. Interacts with tubulin located within the A-tubule of the outer doublets in a ATP-independent manner.

It localises to the cytoplasm. The protein localises to the cytoskeleton. The protein resides in the cilium axoneme. Functionally, part of the multisubunit axonemal ATPase complexes that generate the force for cilia motility and govern beat frequency. Component of the outer arm dynein (ODA). May be involved in a mechanosensory feedback mechanism controlling ODA activity based on external conformational cues by tethering the outer arm dynein heavy chain (DNAH5) to the microtubule within the axoneme. Important for ciliary function in the airways and for the function of the cilia that produce the nodal flow essential for the determination of the left-right asymmetry. In Rattus norvegicus (Rat), this protein is Dynein axonemal light chain 1.